The primary structure comprises 364 residues: DNA polymerase IV (364 aa).

In terms of domain architecture, UmuC spans 14 to 198 (IIHIDMDAFF…LPIEKFHGVG (185 aa)). The Mg(2+) site is built by aspartate 18 and aspartate 116. Residue glutamate 117 is part of the active site.

It belongs to the DNA polymerase type-Y family. Monomer. Requires Mg(2+) as cofactor.

The protein resides in the cytoplasm. The enzyme catalyses DNA(n) + a 2'-deoxyribonucleoside 5'-triphosphate = DNA(n+1) + diphosphate. Its function is as follows. Poorly processive, error-prone DNA polymerase involved in untargeted mutagenesis. Copies undamaged DNA at stalled replication forks, which arise in vivo from mismatched or misaligned primer ends. These misaligned primers can be extended by PolIV. Exhibits no 3'-5' exonuclease (proofreading) activity. May be involved in translesional synthesis, in conjunction with the beta clamp from PolIII. The protein is DNA polymerase IV of Streptococcus pyogenes serotype M6 (strain ATCC BAA-946 / MGAS10394).